The following is a 233-amino-acid chain: Ribonuclease HII (233 aa).

Residues 21–211 (KVIAGVDEVG…LDALPQWRHL (191 aa)) form the RNase H type-2 domain. Aspartate 27, glutamate 28, and aspartate 119 together coordinate a divalent metal cation.

The protein belongs to the RNase HII family. Mn(2+) serves as cofactor. Requires Mg(2+) as cofactor.

Its subcellular location is the cytoplasm. It catalyses the reaction Endonucleolytic cleavage to 5'-phosphomonoester.. Its function is as follows. Endonuclease that specifically degrades the RNA of RNA-DNA hybrids. The chain is Ribonuclease HII from Streptomyces avermitilis (strain ATCC 31267 / DSM 46492 / JCM 5070 / NBRC 14893 / NCIMB 12804 / NRRL 8165 / MA-4680).